We begin with the raw amino-acid sequence, 313 residues long: Apolipoprotein E (313 aa).

A signal peptide spans 1–18 (MKVLWVALVITLLAGCQA). Repeat copies occupy residues 79 to 100 (VLMDETMKEVKAYREELEEQLG), 101 to 122 (PIAQETQARVSKELQAAQARLA), 123 to 144 (SDMEDVRSRLAQYRSEVQAVMG), 145 to 166 (QTTDELRGRLASHLRKLRKRLL), 167 to 188 (RDAEDLQKRLAVYRAGAVEGSE), 189 to 209 (RSVSAIRERLGPLMEKGRGRA), 210 to 229 (GTLASQTLRERAEAWHQKLR), and 230 to 251 (GRVEEMGTQARDHLEEIREQLE). The tract at residues 79–251 (VLMDETMKEV…HLEEIREQLE (173 aa)) is 8 X 22 AA approximate tandem repeats. An LDL and other lipoprotein receptors binding region spans residues 157–167 (HLRKLRKRLLR). 161–164 (LRKR) contacts heparin. The segment at 209–286 (AGTLASQTLR…SWFEPLVEDM (78 aa)) is lipid-binding and lipoprotein association. 225-232 (HQKLRGRV) contributes to the heparin binding site. Residues 262–313 (SQIRLQAEAFQARLKSWFEPLVEDMQRQWAGLVEKVQLAMATSSTSAPSENH) form a homooligomerization region. The interval 274–286 (RLKSWFEPLVEDM) is specificity for association with VLDL.

This sequence belongs to the apolipoprotein A1/A4/E family. Homotetramer. May interact with ABCA1; functionally associated with ABCA1 in the biogenesis of HDLs. May interact with APP/A4 amyloid-beta peptide; the interaction is extremely stable in vitro but its physiological significance is unclear. May interact with MAPT. May interact with MAP2. In the cerebrospinal fluid, interacts with secreted SORL1. Interacts with PMEL; this allows the loading of PMEL luminal fragment on ILVs to induce fibril nucleation. In terms of processing, APOE exists as multiple glycosylated and sialylated glycoforms within cells and in plasma. The extent of glycosylation and sialylation are tissue and context specific. Glycated in plasma VLDL. Post-translationally, phosphorylated by FAM20C in the extracellular medium.

It is found in the secreted. The protein resides in the extracellular space. Its subcellular location is the extracellular matrix. The protein localises to the extracellular vesicle. It localises to the endosome. It is found in the multivesicular body. Functionally, APOE is an apolipoprotein, a protein associating with lipid particles, that mainly functions in lipoprotein-mediated lipid transport between organs via the plasma and interstitial fluids. APOE is a core component of plasma lipoproteins and is involved in their production, conversion and clearance. Apolipoproteins are amphipathic molecules that interact both with lipids of the lipoprotein particle core and the aqueous environment of the plasma. As such, APOE associates with chylomicrons, chylomicron remnants, very low density lipoproteins (VLDL) and intermediate density lipoproteins (IDL) but shows a preferential binding to high-density lipoproteins (HDL). It also binds a wide range of cellular receptors including the LDL receptor/LDLR and the very low-density lipoprotein receptor/VLDLR that mediate the cellular uptake of the APOE-containing lipoprotein particles. Finally, APOE also has a heparin-binding activity and binds heparan-sulfate proteoglycans on the surface of cells, a property that supports the capture and the receptor-mediated uptake of APOE-containing lipoproteins by cells. The protein is Apolipoprotein E (APOE) of Balaenoptera acutorostrata scammoni (North Pacific minke whale).